The sequence spans 598 residues: Probable translation initiation factor IF-2 (598 aa).

A tr-type G domain is found at 3–225 (LRCPIVSVLG…GLAQKFLEQK (223 aa)). Residues 12 to 19 (GHVDHGKT) are G1. 12–19 (GHVDHGKT) lines the GTP pocket. Residues 37-41 (GITQH) form a G2 region. Positions 76 to 79 (DTPG) are G3. GTP-binding positions include 76–80 (DTPGH) and 130–133 (NKLD). The G4 stretch occupies residues 130–133 (NKLD). The segment at 200–202 (SAM) is G5.

This sequence belongs to the TRAFAC class translation factor GTPase superfamily. Classic translation factor GTPase family. IF-2 subfamily.

Function in general translation initiation by promoting the binding of the formylmethionine-tRNA to ribosomes. Seems to function along with eIF-2. The polypeptide is Probable translation initiation factor IF-2 (Methanococcus maripaludis (strain C6 / ATCC BAA-1332)).